Reading from the N-terminus, the 271-residue chain is MSKLASPQSVRALLERHGLFADKRFGQNFLVSEVHLRRIVEAARPFTGPVFEVGPGLGALTRALLEAGAEVTAIEKDLRLRPVLEETLSGLPVRLVFQDALLYPWEEVPQGSLLVANLPYHIATPLVTRLLKTGRFARLVFLVQKEVAERMTARPKTPAYGVLTLRVAHHAVAERLFDLPPGAFFPPPKVWSSLVRLTPTGAPDDPGLFRLVEAAFGKRRKTLLNALAAAGYPKARVEEALRALGLPPRVRAEELDLEAFRRLREGLEGAV.

Residues N28, L30, G54, E75, D99, and N117 each contribute to the S-adenosyl-L-methionine site.

The protein belongs to the class I-like SAM-binding methyltransferase superfamily. rRNA adenine N(6)-methyltransferase family. RsmA subfamily.

The protein localises to the cytoplasm. It carries out the reaction adenosine(1518)/adenosine(1519) in 16S rRNA + 4 S-adenosyl-L-methionine = N(6)-dimethyladenosine(1518)/N(6)-dimethyladenosine(1519) in 16S rRNA + 4 S-adenosyl-L-homocysteine + 4 H(+). Functionally, specifically dimethylates two adjacent adenosines (A1518 and A1519) in the loop of a conserved hairpin near the 3'-end of 16S rRNA in the 30S particle. May play a critical role in biogenesis of 30S subunits. The sequence is that of Ribosomal RNA small subunit methyltransferase A from Thermus thermophilus (strain ATCC BAA-163 / DSM 7039 / HB27).